Consider the following 424-residue polypeptide: Ribulose bisphosphate carboxylase (424 aa).

The active-site Proton acceptor is lysine 159. Lysine 161 contacts substrate. 3 residues coordinate Mg(2+): lysine 185, aspartate 187, and glutamate 188. Lysine 185 bears the N6-carboxylysine mark. Residue histidine 277 is the Proton acceptor of the active site. Residues arginine 278, histidine 310, serine 347–glycine 349, and glutamine 369–glycine 372 contribute to the substrate site.

It belongs to the RuBisCO large chain family. Type III subfamily. Homodimer or homodecamer. In contrast to form I RuBisCO, the form III RuBisCO is composed solely of large subunits. Mg(2+) is required as a cofactor.

It carries out the reaction 2 (2R)-3-phosphoglycerate + 2 H(+) = D-ribulose 1,5-bisphosphate + CO2 + H2O. The enzyme catalyses D-ribulose 1,5-bisphosphate + O2 = 2-phosphoglycolate + (2R)-3-phosphoglycerate + 2 H(+). In terms of biological role, catalyzes the addition of molecular CO(2) and H(2)O to ribulose 1,5-bisphosphate (RuBP), generating two molecules of 3-phosphoglycerate (3-PGA). Functions in an archaeal AMP degradation pathway, together with AMP phosphorylase and R15P isomerase. The sequence is that of Ribulose bisphosphate carboxylase from Pyrococcus abyssi (strain GE5 / Orsay).